A 418-amino-acid polypeptide reads, in one-letter code: Thermolabile hemolysin (418 aa).

A signal peptide spans methionine 1–valine 19. Serine 153 (nucleophile) is an active-site residue. Residues aspartate 390 and histidine 393 contribute to the active site.

This sequence belongs to the 'GDSL' lipolytic enzyme family. Post-translationally, there are two forms of LDH. The LDH(S) may be a protein in which 13 residues of the N-terminal of LDH(L) are deleted.

The protein localises to the secreted. Functionally, phospholipase hydrolyzing both fatty acid esters of phospholipid, i.e. it hydrolyzes phosphatidylcholine (PC) to lysophosphatidylcholine (LPC) and then LPC to glycerophosphorylcholine (GPC). This is Thermolabile hemolysin from Vibrio parahaemolyticus serotype O3:K6 (strain RIMD 2210633).